The sequence spans 294 residues: F-box protein SKIP3 (294 aa).

The region spanning 21-67 (SSTLDSLPEGCISNIISFTSPEDACVAAAVSKIFESAVKSDIVWEKF) is the F-box domain.

As to quaternary structure, part of a SCF (SKP1-cullin-F-box) protein ligase complex. Interacts with SKP1A/ASK1.

It participates in protein modification; protein ubiquitination. This chain is F-box protein SKIP3 (SKIP3), found in Arabidopsis thaliana (Mouse-ear cress).